A 203-amino-acid polypeptide reads, in one-letter code: MAFSPLVDQLLETLRVLPGVGPKTAQRMALHLLERDRDGGRRLVAALGEALEHVGYCQRCRTLAETPLCSICEDARRDEGLLCVVESPADMLAIEQAGGFRGLYFVLHGHLSPLDGIGPEDIGLDQLDERLAGGSVEEVILATNPTVEGEATAHYIAEQLRGTGVRLSRLAYGVPMGGELEYVDGGTLSRAFNGRLPFAQESS.

The C4-type zinc finger occupies 57-72 (CQRCRTLAETPLCSIC). The Toprim domain occupies 80–175 (GLLCVVESPA…RLSRLAYGVP (96 aa)).

Belongs to the RecR family.

May play a role in DNA repair. It seems to be involved in an RecBC-independent recombinational process of DNA repair. It may act with RecF and RecO. The chain is Recombination protein RecR from Chromohalobacter salexigens (strain ATCC BAA-138 / DSM 3043 / CIP 106854 / NCIMB 13768 / 1H11).